Reading from the N-terminus, the 138-residue chain is Large ribosomal subunit protein uL16 (138 aa).

Over residues 1-13 (MLQPSRRKFRKEQ) the composition is skewed to basic residues. The tract at residues 1–22 (MLQPSRRKFRKEQKGRNTGIAT) is disordered.

Belongs to the universal ribosomal protein uL16 family. In terms of assembly, part of the 50S ribosomal subunit.

Binds 23S rRNA and is also seen to make contacts with the A and possibly P site tRNAs. The chain is Large ribosomal subunit protein uL16 from Methylibium petroleiphilum (strain ATCC BAA-1232 / LMG 22953 / PM1).